The sequence spans 301 residues: Mitochondrial carnitine/acylcarnitine carrier protein (301 aa).

Ala2 is subject to N-acetylalanine. Topologically, residues 2 to 12 are cytoplasmic; the sequence is AEEPKPISPLK. Solcar repeat units follow at residues 8–99, 108–196, and 207–293; these read ISPL…GKRL, LTYP…LKNL, and LSVP…PMKI. Residues 13-31 traverse the membrane as a helical segment; that stretch reads NLLAGGFGGVCLVFVGHPL. Residues 32 to 73 are Mitochondrial matrix-facing; sequence DTVKVRLQTQPPSLPGQPPMYSGTIDCFRKTLFREGITGLYR. Residues 74-93 form a helical membrane-spanning segment; sequence GMAAPIIGVTPMFAVCFFGF. The Cytoplasmic segment spans residues 94 to 112; sequence GLGKRLQQKSPEDELTYPQ. A helical transmembrane segment spans residues 113-131; the sequence is LFTAGMLSGVFTTGIMTPG. At 132–170 the chain is on the mitochondrial matrix side; the sequence is ERIKCLLQIQASSGKNKYSGTLDCAKKLYQEFGIRGFYK. Lys148 and Lys157 each carry N6-acetyllysine. Lys170 bears the N6-acetyllysine; alternate mark. Lys170 bears the N6-succinyllysine; alternate mark. The chain crosses the membrane as a helical span at residues 171 to 190; it reads GTALTLMRDVPASGMYFMTY. Residues 191–211 are Cytoplasmic-facing; the sequence is EWLKNLFTPQGKSVHDLSVPR. Residues 212–230 form a helical membrane-spanning segment; it reads VLVAGGFRGIFNWVVAIPP. Residues 231 to 267 are Mitochondrial matrix-facing; that stretch reads DVLKSRFQTAPPGKYPNGFRDVLRELIREEGVTSLYK. The chain crosses the membrane as a helical span at residues 268–287; that stretch reads GFNAVMIRAFPANAACFLGF. Over 288–301 the chain is Cytoplasmic; the sequence is EIPMKILNWIAPNL.

It belongs to the mitochondrial carrier (TC 2.A.29) family. In terms of processing, the N-terminus is blocked.

The protein resides in the mitochondrion inner membrane. The enzyme catalyses O-acetyl-(R)-carnitine(in) + (R)-carnitine(out) = O-acetyl-(R)-carnitine(out) + (R)-carnitine(in). The catalysed reaction is an O-acyl-(R)-carnitine(in) + (R)-carnitine(out) = an O-acyl-(R)-carnitine(out) + (R)-carnitine(in). It carries out the reaction O-propanoyl-(R)-carnitine(in) + (R)-carnitine(out) = O-propanoyl-(R)-carnitine(out) + (R)-carnitine(in). It catalyses the reaction O-hexadecanoyl-(R)-carnitine(in) + (R)-carnitine(out) = O-hexadecanoyl-(R)-carnitine(out) + (R)-carnitine(in). The enzyme catalyses O-octanoyl-(R)-carnitine(in) + (R)-carnitine(out) = O-octanoyl-(R)-carnitine(out) + (R)-carnitine(in). The catalysed reaction is (R)-carnitine(in) = (R)-carnitine(out). Functionally, mediates the electroneutral exchange of acylcarnitines (O-acyl-(R)-carnitine or L-acylcarnitine) of different acyl chain lengths (ranging from O-acetyl-(R)-carnitine to long-chain O-acyl-(R)-carnitines) with free carnitine ((R)-carnitine or L-carnitine) across the mitochondrial inner membrane, via a ping-pong mechanism. Key player in the mitochondrial oxidation pathway, it translocates the fatty acids in the form of acylcarnitines into the mitochondrial matrix, where the carnitine palmitoyltransferase 2 (CPT-2) activates them to undergo fatty acid beta-oxidation. Catalyzes the unidirectional transport (uniport) of carnitine at lower rates than the antiport (exchange). The polypeptide is Mitochondrial carnitine/acylcarnitine carrier protein (Rattus norvegicus (Rat)).